The sequence spans 228 residues: Cytochrome c oxidase subunit 2 (228 aa).

Over 1–14 (MAYPLQLGFQDATS) the chain is Mitochondrial intermembrane. A helical membrane pass occupies residues 15 to 45 (PVMEELLHFHDHTLMIIFLISSLVLYIIMLM). The Mitochondrial matrix portion of the chain corresponds to 46–59 (LTSKLVHTNMMNVQ). The chain crosses the membrane as a helical span at residues 60–87 (EMEMIWTILPAIILILIALPSLHTLYMM). At 88–228 (DEINNPLLTI…FENWSASLAQ (141 aa)) the chain is on the mitochondrial intermembrane side. Positions 161, 196, 198, 200, 204, and 207 each coordinate Cu cation. Residue E198 coordinates Mg(2+). Position 218 is a phosphotyrosine (Y218).

The protein belongs to the cytochrome c oxidase subunit 2 family. As to quaternary structure, component of the cytochrome c oxidase (complex IV, CIV), a multisubunit enzyme composed of 14 subunits. The complex is composed of a catalytic core of 3 subunits MT-CO1, MT-CO2 and MT-CO3, encoded in the mitochondrial DNA, and 11 supernumerary subunits COX4I, COX5A, COX5B, COX6A, COX6B, COX6C, COX7A, COX7B, COX7C, COX8 and NDUFA4, which are encoded in the nuclear genome. The complex exists as a monomer or a dimer and forms supercomplexes (SCs) in the inner mitochondrial membrane with NADH-ubiquinone oxidoreductase (complex I, CI) and ubiquinol-cytochrome c oxidoreductase (cytochrome b-c1 complex, complex III, CIII), resulting in different assemblies (supercomplex SCI(1)III(2)IV(1) and megacomplex MCI(2)III(2)IV(2)). Found in a complex with TMEM177, COA6, COX18, COX20, SCO1 and SCO2. Interacts with TMEM177 in a COX20-dependent manner. Interacts with COX20. Interacts with COX16. Requires Cu cation as cofactor.

It localises to the mitochondrion inner membrane. It catalyses the reaction 4 Fe(II)-[cytochrome c] + O2 + 8 H(+)(in) = 4 Fe(III)-[cytochrome c] + 2 H2O + 4 H(+)(out). In terms of biological role, component of the cytochrome c oxidase, the last enzyme in the mitochondrial electron transport chain which drives oxidative phosphorylation. The respiratory chain contains 3 multisubunit complexes succinate dehydrogenase (complex II, CII), ubiquinol-cytochrome c oxidoreductase (cytochrome b-c1 complex, complex III, CIII) and cytochrome c oxidase (complex IV, CIV), that cooperate to transfer electrons derived from NADH and succinate to molecular oxygen, creating an electrochemical gradient over the inner membrane that drives transmembrane transport and the ATP synthase. Cytochrome c oxidase is the component of the respiratory chain that catalyzes the reduction of oxygen to water. Electrons originating from reduced cytochrome c in the intermembrane space (IMS) are transferred via the dinuclear copper A center (CU(A)) of subunit 2 and heme A of subunit 1 to the active site in subunit 1, a binuclear center (BNC) formed by heme A3 and copper B (CU(B)). The BNC reduces molecular oxygen to 2 water molecules using 4 electrons from cytochrome c in the IMS and 4 protons from the mitochondrial matrix. The protein is Cytochrome c oxidase subunit 2 (MT-CO2) of Loxodonta africana (African elephant).